A 652-amino-acid polypeptide reads, in one-letter code: Probable protein phosphatase 2C 19 (652 aa).

The region spanning 265–517 (KYVVSSMQGW…DNTTVILVLF (253 aa)) is the PPM-type phosphatase domain. Mn(2+)-binding residues include aspartate 300, glycine 301, glutamate 467, and aspartate 508. The interval 524-567 (AVPPVDTDTDTDSHTGDDVDNNDPANEVDPTANAGSDDSNTSDE) is disordered.

Belongs to the PP2C family. Requires Mg(2+) as cofactor. It depends on Mn(2+) as a cofactor.

The catalysed reaction is O-phospho-L-seryl-[protein] + H2O = L-seryl-[protein] + phosphate. It carries out the reaction O-phospho-L-threonyl-[protein] + H2O = L-threonyl-[protein] + phosphate. The sequence is that of Probable protein phosphatase 2C 19 from Oryza sativa subsp. japonica (Rice).